The sequence spans 183 residues: ATP-dependent protease subunit HslV (183 aa).

The active site involves Thr10. The Na(+) site is built by Ala164, Cys167, and Thr170.

Belongs to the peptidase T1B family. HslV subfamily. In terms of assembly, a double ring-shaped homohexamer of HslV is capped on each side by a ring-shaped HslU homohexamer. The assembly of the HslU/HslV complex is dependent on binding of ATP.

It localises to the cytoplasm. It catalyses the reaction ATP-dependent cleavage of peptide bonds with broad specificity.. Allosterically activated by HslU binding. In terms of biological role, protease subunit of a proteasome-like degradation complex believed to be a general protein degrading machinery. This Rhizorhabdus wittichii (strain DSM 6014 / CCUG 31198 / JCM 15750 / NBRC 105917 / EY 4224 / RW1) (Sphingomonas wittichii) protein is ATP-dependent protease subunit HslV.